The primary structure comprises 228 residues: Biosynthetic peptidoglycan transglycosylase (228 aa).

A helical transmembrane segment spans residues 8 to 28; it reads ILAALVAAFLLYNLWVLGHII.

It belongs to the glycosyltransferase 51 family.

The protein localises to the cell inner membrane. It catalyses the reaction [GlcNAc-(1-&gt;4)-Mur2Ac(oyl-L-Ala-gamma-D-Glu-L-Lys-D-Ala-D-Ala)](n)-di-trans,octa-cis-undecaprenyl diphosphate + beta-D-GlcNAc-(1-&gt;4)-Mur2Ac(oyl-L-Ala-gamma-D-Glu-L-Lys-D-Ala-D-Ala)-di-trans,octa-cis-undecaprenyl diphosphate = [GlcNAc-(1-&gt;4)-Mur2Ac(oyl-L-Ala-gamma-D-Glu-L-Lys-D-Ala-D-Ala)](n+1)-di-trans,octa-cis-undecaprenyl diphosphate + di-trans,octa-cis-undecaprenyl diphosphate + H(+). It participates in cell wall biogenesis; peptidoglycan biosynthesis. In terms of biological role, peptidoglycan polymerase that catalyzes glycan chain elongation from lipid-linked precursors. The polypeptide is Biosynthetic peptidoglycan transglycosylase (Chromobacterium violaceum (strain ATCC 12472 / DSM 30191 / JCM 1249 / CCUG 213 / NBRC 12614 / NCIMB 9131 / NCTC 9757 / MK)).